A 405-amino-acid polypeptide reads, in one-letter code: Serine/threonine-protein kinase SSN3 (405 aa).

Residues 40–350 enclose the Protein kinase domain; that stretch reads YEIIGYIAAG…ANDALLHPYF (311 aa). Residues 46–54 and K71 each bind ATP; that span reads IAAGTYGRV. D173 serves as the catalytic Proton acceptor. Residues 377-405 form a disordered region; the sequence is DSDIKTMTYQGTKRGSQGGDNLHPRKKQK. The span at 381–391 shows a compositional bias: polar residues; sequence KTMTYQGTKRG.

This sequence belongs to the protein kinase superfamily. CMGC Ser/Thr protein kinase family. CDC2/CDKX subfamily. As to quaternary structure, component of the srb8-11 complex, a regulatory module of the Mediator complex. Mg(2+) is required as a cofactor.

Its subcellular location is the nucleus. The enzyme catalyses L-seryl-[protein] + ATP = O-phospho-L-seryl-[protein] + ADP + H(+). The catalysed reaction is L-threonyl-[protein] + ATP = O-phospho-L-threonyl-[protein] + ADP + H(+). It carries out the reaction [DNA-directed RNA polymerase] + ATP = phospho-[DNA-directed RNA polymerase] + ADP + H(+). Component of the srb8-11 complex. The srb8-11 complex is a regulatory module of the Mediator complex which is itself dependent transcription. The srb8-11 complex may be involved in the transcriptional repression of a subset of genes regulated by Mediator. It may inhibit the association of the Mediator complex with RNA polymerase II to form the holoenzyme complex. The srb8-11 complex phosphorylates the C-terminal domain (CTD) of the largest subunit of RNA polymerase II. In Yarrowia lipolytica (strain CLIB 122 / E 150) (Yeast), this protein is Serine/threonine-protein kinase SSN3 (SSN3).